A 613-amino-acid polypeptide reads, in one-letter code: UvrABC system protein C (613 aa).

The region spanning 12 to 89 (DHPGVYIMHD…IKQHRPRYNV (78 aa)) is the GIY-YIG domain. Residues 199 to 234 (TALVKELKEQMEAAAARLEFEKAARLRDQLRAVQEV) enclose the UVR domain.

It belongs to the UvrC family. Interacts with UvrB in an incision complex.

The protein localises to the cytoplasm. Functionally, the UvrABC repair system catalyzes the recognition and processing of DNA lesions. UvrC both incises the 5' and 3' sides of the lesion. The N-terminal half is responsible for the 3' incision and the C-terminal half is responsible for the 5' incision. In Moorella thermoacetica (strain ATCC 39073 / JCM 9320), this protein is UvrABC system protein C.